Here is a 168-residue protein sequence, read N- to C-terminus: ATP synthase subunit b (168 aa).

Residues 11 to 31 (NTVLGNIIVVSGAFIILLVLL) traverse the membrane as a helical segment.

This sequence belongs to the ATPase B chain family. In terms of assembly, F-type ATPases have 2 components, F(1) - the catalytic core - and F(0) - the membrane proton channel. F(1) has five subunits: alpha(3), beta(3), gamma(1), delta(1), epsilon(1). F(0) has three main subunits: a(1), b(2) and c(10-14). The alpha and beta chains form an alternating ring which encloses part of the gamma chain. F(1) is attached to F(0) by a central stalk formed by the gamma and epsilon chains, while a peripheral stalk is formed by the delta and b chains.

Its subcellular location is the cell membrane. In terms of biological role, f(1)F(0) ATP synthase produces ATP from ADP in the presence of a proton or sodium gradient. F-type ATPases consist of two structural domains, F(1) containing the extramembraneous catalytic core and F(0) containing the membrane proton channel, linked together by a central stalk and a peripheral stalk. During catalysis, ATP synthesis in the catalytic domain of F(1) is coupled via a rotary mechanism of the central stalk subunits to proton translocation. Its function is as follows. Component of the F(0) channel, it forms part of the peripheral stalk, linking F(1) to F(0). This is ATP synthase subunit b from Lactococcus lactis subsp. lactis (strain IL1403) (Streptococcus lactis).